A 511-amino-acid chain; its full sequence is Fusicocca-1,10(14)-diene-8beta,16-diol C-9 hydroxylase (511 aa).

A helical membrane pass occupies residues 7–29 (TVAALAAVFVAGTLLSRLASWIR). Residues N64, N163, and N343 are each glycosylated (N-linked (GlcNAc...) asparagine). C450 serves as a coordination point for heme.

It belongs to the cytochrome P450 family. Heme is required as a cofactor.

It localises to the membrane. It participates in mycotoxin biosynthesis. In terms of biological role, cytochrome P450 monooxygenase; part of the 2 gene clusters that mediate the biosynthesis of fusicoccins, diterpene glucosides that display phytohormone-like activity and function as potent activators of plasma membrane H(+)-ATPases in plants by modifying 14-3-3 proteins and cause the plant disease constriction canker. The first step in the pathway is performed by the fusicoccadiene synthase PaFS that possesses both prenyl transferase and terpene cyclase activity, converting isopentenyl diphosphate and dimethylallyl diphosphate into geranylgeranyl diphosphate (GGDP) and successively converting GGDP into fusicocca-2,10(14)-diene, a precursor for fusicoccin H. The second step is the oxidation at the C-8 position by the cytochrome P450 monooxygenase PaP450-2 to yield fusicocca-2,10(14)-diene-8-beta-ol. The cytochrome P450 monooxygenase PaP450-1 then catalyzes the hydroxylation at the C-16 position to produce fusicocca-2,10(14)-diene-8-beta,16-diol. The dioxygenase fc-dox then catalyzes the 16-oxydation of fusicocca-2,10(14)-diene-8-beta,16-diol to yield an aldehyde (8-beta-hydroxyfusicocca-1,10(14)-dien-16-al). The short-chain dehydrogenase/reductase fc-sdr catalyzes the reduction of the aldehyde to yield fusicocca-1,10(14)-diene-8-beta,16-diol. The next step is the hydroxylation at C-9 performed by the cytochrome P450 monooxygenase PaP450-3 that leads to fusicoccin H aglycon which is glycosylated to fusicoccin H by the O-glycosyltransferase PaGT. Hydroxylation at C-12 by the cytochrome P450 monooxygenase PaP450-4 leads then to the production of fusicoccin Q and is followed by methylation by the O-methyltransferase PaMT to yield fusicoccin P. Fusicoccin P is further converted to fusicoccin J via prenylation by the O-glucose prenyltransferase PaPT. Cytochrome P450 monooxygenase PaP450-5 then performs hydroxylation at C-19 to yield dideacetyl-fusicoccin A which is acetylated to 3'-O-deacetyl-fusicoccin A by the O-acetyltransferase PaAT-2. Finally, a another acetylation by the O-acetyltransferase PaAT-1 yields fusicoccin A. The protein is Fusicocca-1,10(14)-diene-8beta,16-diol C-9 hydroxylase of Phomopsis amygdali (Fusicoccum amygdali).